Reading from the N-terminus, the 200-residue chain is Small ribosomal subunit protein uS4 (200 aa).

The tract at residues 22 to 42 (TGKELEKRPYAPGPHGPGQRK) is disordered. Residues 92 to 155 (ARLDNVVYKL…RNLSIIKESV (64 aa)) enclose the S4 RNA-binding domain.

Belongs to the universal ribosomal protein uS4 family. As to quaternary structure, part of the 30S ribosomal subunit. Contacts protein S5. The interaction surface between S4 and S5 is involved in control of translational fidelity.

Functionally, one of the primary rRNA binding proteins, it binds directly to 16S rRNA where it nucleates assembly of the body of the 30S subunit. With S5 and S12 plays an important role in translational accuracy. This Bacillus velezensis (strain DSM 23117 / BGSC 10A6 / LMG 26770 / FZB42) (Bacillus amyloliquefaciens subsp. plantarum) protein is Small ribosomal subunit protein uS4.